We begin with the raw amino-acid sequence, 671 residues long: Amidase chry2 (671 aa).

Cysteine 2 serves as the catalytic Nucleophile. In terms of domain architecture, Glutamine amidotransferase type-2 spans 2-220 (CGISAFITHP…PGHYLICRPN (219 aa)). The Asparagine synthetase domain occupies 251–639 (VRERLLEAVR…TQDAMDGAFN (389 aa)).

This sequence belongs to the asparagine synthetase family.

It functions in the pathway pigment biosynthesis. In terms of biological role, amidase; part of the gene cluster that mediates the biosynthesis of the yellow pigment chrysogine. Pyruvic acid and anthranilic acid are likely substrates for the nonribosomal peptide synthetase chry1/NRPS14, with pyruvic acid adenylated by the first A domain and anthranilic acid by the second. If pyruvic acid and anthranilic acid are merged and released from chry1/NRPS14 by hydrolysis, a subsequent amidation would lead to 2-pyruvoylaminobenzamide. This process is probably catalyzed by the amidotransferase chry2 using glutamine as amino donor. The dehydrogenase chry5 that has a terminal berberine bridge domain for C-N cyclization could catalyze the cyclization of 2-pyruvoylaminobenzamide to yield acetyl-4(3H)-quinazolidinone. A final reduction of acetyl-4(3H)-quinazolidinone catalyzed by the oxidoreductase chry4 would result in chrysogine. The polypeptide is Amidase chry2 (Gibberella zeae (strain ATCC MYA-4620 / CBS 123657 / FGSC 9075 / NRRL 31084 / PH-1) (Wheat head blight fungus)).